Consider the following 396-residue polypeptide: Apurinic-apyrimidinic endonuclease (396 aa).

Residues 31–41 (KGRGKIQKHIQ) are compositionally biased toward basic residues. The disordered stretch occupies residues 31-100 (KGRGKIQKHI…TSGETIAQKK (70 aa)). Positions 55–70 (NQSPGTTVEETLTEEN) are enriched in polar residues. Positions 72-85 (STDKEETSKLENKP) are enriched in basic and acidic residues. Residues H185, H225, E261, D295, H298, H332, D345, H347, and E377 each coordinate Zn(2+).

Belongs to the AP endonuclease 2 family. Requires Zn(2+) as cofactor.

The protein resides in the nucleus. The sequence is that of Apurinic-apyrimidinic endonuclease (apn-1) from Caenorhabditis elegans.